Reading from the N-terminus, the 186-residue chain is Adenylate kinase (186 aa).

Residue 12-17 (GAGKGT) participates in ATP binding. Positions 32-61 (STGDLLRAEVNAQSPLGKEAALIMNKGELV) are NMP. AMP-binding positions include Thr-33, Arg-38, 59 to 61 (ELV), 86 to 89 (GFPR), and Gln-93. The interval 127 to 133 (SRGRSDD) is LID. Arg-128 provides a ligand contact to ATP. Positions 130 and 141 each coordinate AMP. ATP is bound at residue Gly-169.

The protein belongs to the adenylate kinase family. As to quaternary structure, monomer.

It is found in the cytoplasm. It carries out the reaction AMP + ATP = 2 ADP. Its pathway is purine metabolism; AMP biosynthesis via salvage pathway; AMP from ADP: step 1/1. Catalyzes the reversible transfer of the terminal phosphate group between ATP and AMP. Plays an important role in cellular energy homeostasis and in adenine nucleotide metabolism. This Prochlorococcus marinus (strain MIT 9211) protein is Adenylate kinase.